We begin with the raw amino-acid sequence, 583 residues long: Threonine--tRNA ligase (583 aa).

A catalytic region spans residues 185–478 (DHRKLGRELN…LVEHYGGAFP (294 aa)). C278, H329, and H455 together coordinate Zn(2+).

Belongs to the class-II aminoacyl-tRNA synthetase family. As to quaternary structure, homodimer. Requires Zn(2+) as cofactor.

Its subcellular location is the cytoplasm. The catalysed reaction is tRNA(Thr) + L-threonine + ATP = L-threonyl-tRNA(Thr) + AMP + diphosphate + H(+). Its function is as follows. Catalyzes the attachment of threonine to tRNA(Thr) in a two-step reaction: L-threonine is first activated by ATP to form Thr-AMP and then transferred to the acceptor end of tRNA(Thr). Also edits incorrectly charged L-seryl-tRNA(Thr). This Borrelia duttonii (strain Ly) protein is Threonine--tRNA ligase.